A 185-amino-acid polypeptide reads, in one-letter code: Ribosome maturation factor RimM (185 aa).

Residues 108–183 (PGEFHVTDLL…RLEIKTIPGL (76 aa)) form the PRC barrel domain.

This sequence belongs to the RimM family. As to quaternary structure, binds ribosomal protein uS19.

The protein resides in the cytoplasm. In terms of biological role, an accessory protein needed during the final step in the assembly of 30S ribosomal subunit, possibly for assembly of the head region. Essential for efficient processing of 16S rRNA. May be needed both before and after RbfA during the maturation of 16S rRNA. It has affinity for free ribosomal 30S subunits but not for 70S ribosomes. The chain is Ribosome maturation factor RimM from Synechocystis sp. (strain ATCC 27184 / PCC 6803 / Kazusa).